We begin with the raw amino-acid sequence, 340 residues long: Glycerol-3-phosphate dehydrogenase [NAD(P)+] (340 aa).

NADPH is bound by residues S13, W14, and K108. Sn-glycerol 3-phosphate contacts are provided by K108, G139, and S141. Position 143 (A143) interacts with NADPH. Residues K194, D247, S257, R258, and N259 each coordinate sn-glycerol 3-phosphate. K194 serves as the catalytic Proton acceptor. R258 serves as a coordination point for NADPH. NADPH-binding residues include V282 and E284.

It belongs to the NAD-dependent glycerol-3-phosphate dehydrogenase family.

The protein localises to the cytoplasm. It carries out the reaction sn-glycerol 3-phosphate + NAD(+) = dihydroxyacetone phosphate + NADH + H(+). The catalysed reaction is sn-glycerol 3-phosphate + NADP(+) = dihydroxyacetone phosphate + NADPH + H(+). Its pathway is membrane lipid metabolism; glycerophospholipid metabolism. Its function is as follows. Catalyzes the reduction of the glycolytic intermediate dihydroxyacetone phosphate (DHAP) to sn-glycerol 3-phosphate (G3P), the key precursor for phospholipid synthesis. This chain is Glycerol-3-phosphate dehydrogenase [NAD(P)+], found in Streptococcus thermophilus (strain CNRZ 1066).